The sequence spans 672 residues: tRNA 5-methylaminomethyl-2-thiouridine biosynthesis bifunctional protein MnmC (672 aa).

Residues 1–243 (MTSIKNAELG…KREMIAGSME (243 aa)) are tRNA (mnm(5)s(2)U34)-methyltransferase. Positions 269-672 (IGGGIASAAL…LRKGKAITEL (404 aa)) are FAD-dependent cmnm(5)s(2)U34 oxidoreductase.

This sequence in the N-terminal section; belongs to the methyltransferase superfamily. tRNA (mnm(5)s(2)U34)-methyltransferase family. In the C-terminal section; belongs to the DAO family. It depends on FAD as a cofactor.

It localises to the cytoplasm. It catalyses the reaction 5-aminomethyl-2-thiouridine(34) in tRNA + S-adenosyl-L-methionine = 5-methylaminomethyl-2-thiouridine(34) in tRNA + S-adenosyl-L-homocysteine + H(+). In terms of biological role, catalyzes the last two steps in the biosynthesis of 5-methylaminomethyl-2-thiouridine (mnm(5)s(2)U) at the wobble position (U34) in tRNA. Catalyzes the FAD-dependent demodification of cmnm(5)s(2)U34 to nm(5)s(2)U34, followed by the transfer of a methyl group from S-adenosyl-L-methionine to nm(5)s(2)U34, to form mnm(5)s(2)U34. The polypeptide is tRNA 5-methylaminomethyl-2-thiouridine biosynthesis bifunctional protein MnmC (Vibrio campbellii (strain ATCC BAA-1116)).